Here is a 576-residue protein sequence, read N- to C-terminus: Lysine--tRNA ligase (576 aa).

Positions 413 and 420 each coordinate Mg(2+).

The protein belongs to the class-II aminoacyl-tRNA synthetase family. In terms of assembly, homodimer. Mg(2+) serves as cofactor.

Its subcellular location is the cytoplasm. It catalyses the reaction tRNA(Lys) + L-lysine + ATP = L-lysyl-tRNA(Lys) + AMP + diphosphate. The chain is Lysine--tRNA ligase from Bacteroides thetaiotaomicron (strain ATCC 29148 / DSM 2079 / JCM 5827 / CCUG 10774 / NCTC 10582 / VPI-5482 / E50).